Consider the following 514-residue polypeptide: Na(+)/H(+) antiporter NhaB (514 aa).

Transmembrane regions (helical) follow at residues L23–A43, I52–I72, L97–F117, L120–F140, F144–I164, L202–P222, F238–L258, A303–I323, F353–F373, L391–I411, A447–I467, and V475–F495.

This sequence belongs to the NhaB Na(+)/H(+) (TC 2.A.34) antiporter family.

Its subcellular location is the cell inner membrane. It catalyses the reaction 2 Na(+)(in) + 3 H(+)(out) = 2 Na(+)(out) + 3 H(+)(in). In terms of biological role, na(+)/H(+) antiporter that extrudes sodium in exchange for external protons. This is Na(+)/H(+) antiporter NhaB from Escherichia fergusonii (strain ATCC 35469 / DSM 13698 / CCUG 18766 / IAM 14443 / JCM 21226 / LMG 7866 / NBRC 102419 / NCTC 12128 / CDC 0568-73).